The primary structure comprises 124 residues: MAKPYGVVIISHSKDVAKGVHDIIKEIAPDVSITHAGGTEDGRIGTSFDTVNEAIESNEADKVYTFYDLGSAKMNIETVEEISEKEIILFNAPILEGAYATAAQIQMDEKPEVIAANLKTIEIK.

Residues 4 to 124 enclose the PTS EIIA type-4 domain; it reads PYGVVIISHS…AANLKTIEIK (121 aa). The Tele-phosphohistidine intermediate role is filled by His12.

Belongs to the PEP-utilizing enzyme family. In terms of assembly, homodimer. The dihydroxyacetone kinase complex is composed of a homodimer of DhaM, a homodimer of DhaK and the subunit DhaL.

Its subcellular location is the cytoplasm. The enzyme catalyses dihydroxyacetone + phosphoenolpyruvate = dihydroxyacetone phosphate + pyruvate. Component of the dihydroxyacetone kinase complex, which is responsible for the phosphoenolpyruvate (PEP)-dependent phosphorylation of dihydroxyacetone. DhaM serves as the phosphoryl donor. Is phosphorylated by phosphoenolpyruvate in an EI- and HPr-dependent reaction, and a phosphorelay system on histidine residues finally leads to phosphoryl transfer to DhaL and dihydroxyacetone. This is PEP-dependent dihydroxyacetone kinase 1, phosphoryl donor subunit DhaM from Listeria innocua serovar 6a (strain ATCC BAA-680 / CLIP 11262).